The chain runs to 221 residues: GTP-binding nuclear protein Ran-2 (221 aa).

The Small GTPase Ran-type domain occupies 10–174 (DYPSFKLVIV…LYLARKLAGD (165 aa)). 21-28 (DGGTGKTT) contacts GTP. The tract at residues 40–48 (KKYEPTIGV) is switch-I. GTP is bound by residues Gly-71, 125–128 (NKVD), and 153–155 (SAK). Residues 71–87 (GQEKFGGLRDGYYIHGQ) form a switch-II region.

This sequence belongs to the small GTPase superfamily. Ran family. As to quaternary structure, found in a nuclear export complex with RanGTP, exportin and pre-miRNA.

Its subcellular location is the nucleus. Its function is as follows. GTP-binding protein involved in nucleocytoplasmic transport. Required for the import of protein into the nucleus and also for RNA export. Involved in chromatin condensation and control of cell cycle. In Oryza sativa subsp. indica (Rice), this protein is GTP-binding nuclear protein Ran-2 (RAN2).